The primary structure comprises 132 residues: Ribonuclease P protein component 2 (132 aa).

It belongs to the eukaryotic/archaeal RNase P protein component 2 family. As to quaternary structure, consists of a catalytic RNA component and at least 4-5 protein subunits.

It is found in the cytoplasm. It catalyses the reaction Endonucleolytic cleavage of RNA, removing 5'-extranucleotides from tRNA precursor.. In terms of biological role, part of ribonuclease P, a protein complex that generates mature tRNA molecules by cleaving their 5'-ends. This chain is Ribonuclease P protein component 2, found in Methanosarcina acetivorans (strain ATCC 35395 / DSM 2834 / JCM 12185 / C2A).